The primary structure comprises 290 residues: 4-hydroxy-tetrahydrodipicolinate synthase (290 aa).

Residue threonine 44 coordinates pyruvate. The Proton donor/acceptor role is filled by tyrosine 132. Lysine 160 acts as the Schiff-base intermediate with substrate in catalysis. A pyruvate-binding site is contributed by isoleucine 202.

Belongs to the DapA family. Homotetramer; dimer of dimers.

It localises to the cytoplasm. The catalysed reaction is L-aspartate 4-semialdehyde + pyruvate = (2S,4S)-4-hydroxy-2,3,4,5-tetrahydrodipicolinate + H2O + H(+). It functions in the pathway amino-acid biosynthesis; L-lysine biosynthesis via DAP pathway; (S)-tetrahydrodipicolinate from L-aspartate: step 3/4. Its function is as follows. Catalyzes the condensation of (S)-aspartate-beta-semialdehyde [(S)-ASA] and pyruvate to 4-hydroxy-tetrahydrodipicolinate (HTPA). In Legionella pneumophila (strain Corby), this protein is 4-hydroxy-tetrahydrodipicolinate synthase.